The sequence spans 246 residues: Thaumatin-like protein 1a (246 aa).

Positions 1-24 (MMKSQVASLLGLTLAILFFSGAHA) are cleaved as a signal peptide. Disulfide bonds link Cys-33-Cys-245, Cys-81-Cys-91, Cys-96-Cys-103, Cys-151-Cys-234, Cys-156-Cys-217, Cys-164-Cys-180, Cys-184-Cys-193, and Cys-194-Cys-204.

The protein belongs to the thaumatin family.

Its subcellular location is the secreted. The sequence is that of Thaumatin-like protein 1a (TL1) from Malus domestica (Apple).